The following is a 239-amino-acid chain: Elongation factor Ts (239 aa).

Residues 82 to 85 are involved in Mg(2+) ion dislocation from EF-Tu; sequence TDFV. Positions 213–239 are disordered; sequence AAQTKPKAEEKPAAKKATSKKKKGKKK. Residues 229 to 239 show a composition bias toward basic residues; that stretch reads ATSKKKKGKKK.

Belongs to the EF-Ts family.

It localises to the cytoplasm. Functionally, associates with the EF-Tu.GDP complex and induces the exchange of GDP to GTP. It remains bound to the aminoacyl-tRNA.EF-Tu.GTP complex up to the GTP hydrolysis stage on the ribosome. The chain is Elongation factor Ts from Acaryochloris marina (strain MBIC 11017).